The chain runs to 297 residues: Bifunctional protein FolD 1 (297 aa).

NADP(+) is bound by residues 164–166 (GRS), Ser-193, and Ile-234.

This sequence belongs to the tetrahydrofolate dehydrogenase/cyclohydrolase family. As to quaternary structure, homodimer.

It carries out the reaction (6R)-5,10-methylene-5,6,7,8-tetrahydrofolate + NADP(+) = (6R)-5,10-methenyltetrahydrofolate + NADPH. It catalyses the reaction (6R)-5,10-methenyltetrahydrofolate + H2O = (6R)-10-formyltetrahydrofolate + H(+). Its pathway is one-carbon metabolism; tetrahydrofolate interconversion. Functionally, catalyzes the oxidation of 5,10-methylenetetrahydrofolate to 5,10-methenyltetrahydrofolate and then the hydrolysis of 5,10-methenyltetrahydrofolate to 10-formyltetrahydrofolate. In Haloarcula marismortui (strain ATCC 43049 / DSM 3752 / JCM 8966 / VKM B-1809) (Halobacterium marismortui), this protein is Bifunctional protein FolD 1.